The primary structure comprises 270 residues: Glutamate 5-kinase (270 aa).

Position 15 (Lys15) interacts with ATP. Substrate-binding residues include Ser55, Asp142, and Asn158. ATP is bound by residues 178–179 (SD) and 220–226 (TGGMLSK).

It belongs to the glutamate 5-kinase family.

It localises to the cytoplasm. It catalyses the reaction L-glutamate + ATP = L-glutamyl 5-phosphate + ADP. Its pathway is amino-acid biosynthesis; L-proline biosynthesis; L-glutamate 5-semialdehyde from L-glutamate: step 1/2. Its function is as follows. Catalyzes the transfer of a phosphate group to glutamate to form L-glutamate 5-phosphate. The chain is Glutamate 5-kinase from Streptococcus uberis (strain ATCC BAA-854 / 0140J).